A 120-amino-acid chain; its full sequence is Aspartate 1-decarboxylase (120 aa).

Catalysis depends on Ser-25, which acts as the Schiff-base intermediate with substrate; via pyruvic acid. Ser-25 is subject to Pyruvic acid (Ser). A substrate-binding site is contributed by Thr-57. Tyr-58 (proton donor) is an active-site residue. 73–75 (GAA) lines the substrate pocket.

This sequence belongs to the PanD family. In terms of assembly, heterooctamer of four alpha and four beta subunits. Pyruvate is required as a cofactor. Post-translationally, is synthesized initially as an inactive proenzyme, which is activated by self-cleavage at a specific serine bond to produce a beta-subunit with a hydroxyl group at its C-terminus and an alpha-subunit with a pyruvoyl group at its N-terminus.

The protein resides in the cytoplasm. The enzyme catalyses L-aspartate + H(+) = beta-alanine + CO2. It participates in cofactor biosynthesis; (R)-pantothenate biosynthesis; beta-alanine from L-aspartate: step 1/1. Its function is as follows. Catalyzes the pyruvoyl-dependent decarboxylation of aspartate to produce beta-alanine. The protein is Aspartate 1-decarboxylase of Coprothermobacter proteolyticus (strain ATCC 35245 / DSM 5265 / OCM 4 / BT).